The sequence spans 559 residues: Leucine-rich repeat protein soc-2 (559 aa).

The segment covering 1–17 (METSKEFEFRPAKETSR) has biased composition (basic and acidic residues). Residues 1–55 (METSKEFEFRPAKETSRSKSPGGIVGRLSNFARNKARHSLSEKGSNSVGGSGGAG) form a disordered region. LRR repeat units follow at residues 74–95 (QDQR…IKEL), 97–118 (QLTE…IGQL), 120–142 (NLKK…ASLE), 143–164 (SLET…IYKI), 166–187 (SLET…IGNL), 189–210 (KLKM…IGKL), 212–233 (SLVV…IGDC), 235–256 (SLTQ…IGKL), 258–279 (NLVR…LESC), 281–302 (QLEE…LLTM), 305–326 (KIHT…GPQQ), 329–350 (STVT…IFSK), 353–374 (RLTK…MGSW), 376–397 (SITE…IEKL), 399–420 (NLEI…IGNL), 422–443 (KLRE…IGFL), 445–466 (HLTK…IGNL), 468–489 (SLQD…IGHL), 491–513 (SLKS…LALC), and 515–536 (SLEI…ITAG).

Belongs to the SHOC2 family. In terms of assembly, interacts with let-60.

In terms of biological role, acts as a Ras effector and participates in MAPK pathway activation. Probably acts as a scaffolding protein in a protein phosphatase complex that specifically dephosphorylates Raf kinase and stimulates Raf activity at specialized signaling complexes upon Ras activation. Required for vulval development. Involved in fluid homeostasis. Plays a role in nicotinic acetylcholine receptor (nAChR)-mediated sensitivity to nicotine. The chain is Leucine-rich repeat protein soc-2 (soc-2) from Caenorhabditis elegans.